Here is a 208-residue protein sequence, read N- to C-terminus: Intraflagellar transport protein 43 homolog (208 aa).

Position 1 is an N-acetylmethionine (M1). Residues S18 to G65 are disordered. Residues Q28–A53 are compositionally biased toward polar residues. S78 carries the post-translational modification Phosphoserine.

Belongs to the IFT43 family. In terms of assembly, component of the IFT complex A (IFT-A) complex. IFT-A complex is divided into a core subcomplex composed of IFT122:IFT140:WDR19 which is associated with TULP3 and a peripheral subcomplex composed of IFT43:WDR35:TTC21B. Interacts directy with IFT122, WDR35 and TTC21B. As to expression, expressed in the retina, predominantly in the photoreceptor outer segment.

It localises to the cytoplasm. It is found in the cytoskeleton. Its subcellular location is the cell projection. The protein resides in the cilium. As a component of IFT complex A (IFT-A), a complex required for retrograde ciliary transport and entry into cilia of G protein-coupled receptors (GPCRs), it is involved in ciliogenesis. Involved in retrograde ciliary transport along microtubules from the ciliary tip to the base. The chain is Intraflagellar transport protein 43 homolog from Homo sapiens (Human).